Here is a 404-residue protein sequence, read N- to C-terminus: Inner membrane transport protein YdiM (404 aa).

Residues 1–5 (MKNPY) lie on the Periplasmic side of the membrane. The chain crosses the membrane as a helical span at residues 6-26 (FPTALGLYFNYLVHGMGVLLM). The Cytoplasmic portion of the chain corresponds to 27-43 (SLNMASLETLWQTNAAG). A helical transmembrane segment spans residues 44 to 64 (VSIVISSLGIGRLSVLLFAGL). The Periplasmic segment spans residues 65–84 (LSDRFGRRPFIMLGMCCYMA). A helical membrane pass occupies residues 85-105 (FFFGILQTNNIIIAYVFGFLA). The Cytoplasmic segment spans residues 106-132 (GMANSFLDAGTYPSLMEAFPRSPGTAN). Residues 133 to 153 (ILIKAFVSSGQFLLPLIISLL) traverse the membrane as a helical segment. Topologically, residues 154–157 (VWAE) are periplasmic. The chain crosses the membrane as a helical span at residues 158–178 (LWFGWSFMIAAGIMFINALFL). Topologically, residues 179 to 206 (YRCTFPPHPGRRLPVIKKTTSSTEHRCS) are cytoplasmic. Residues 207-227 (IIDLASYTLYGYISMATFYLV) traverse the membrane as a helical segment. Over 228 to 246 (SQWLAQYGQFVAGMSYTMS) the chain is Periplasmic. A helical membrane pass occupies residues 247-267 (IKLLSIYTVGSLLCVFITAPL). Over 268–273 (IRNTVR) the chain is Cytoplasmic. The chain crosses the membrane as a helical span at residues 274–294 (PTTLLMLYTFISFIALFTVCL). The Periplasmic segment spans residues 295-296 (HP). The helical transmembrane segment at 297–317 (TFYVVIIFAFVIGFTSAGGVV) threads the bilayer. The Cytoplasmic segment spans residues 318-336 (QIGLTLMAERFPYAKGKAT). The chain crosses the membrane as a helical span at residues 337–357 (GIYYSAGSIATFTIPLITAHL). Residues 358–364 (SQRSIAD) are Periplasmic-facing. A helical transmembrane segment spans residues 365–385 (IMWFDTAIAAIGFLLALFIGL). The Cytoplasmic portion of the chain corresponds to 386–404 (RSRKKTRHHSLKENVAPGG).

This sequence belongs to the major facilitator superfamily.

The protein localises to the cell inner membrane. The sequence is that of Inner membrane transport protein YdiM (ydiM) from Escherichia coli (strain K12).